The sequence spans 364 residues: Heme A synthase (364 aa).

Helical transmembrane passes span 25-45 (ALRL…LVGG), 111-131 (FLAR…WATG), 139-159 (WPLV…WWMV), 174-194 (LATH…VMRG), 212-232 (AIAL…VAGL), 270-290 (VQFV…YHMV), 305-325 (SVVL…ALLL), and 327-347 (VPLD…GFTV). H274 contributes to the heme binding site. H335 is a binding site for heme.

This sequence belongs to the COX15/CtaA family. Type 2 subfamily. As to quaternary structure, interacts with CtaB. The cofactor is heme b.

It localises to the cell membrane. It carries out the reaction Fe(II)-heme o + 2 A + H2O = Fe(II)-heme a + 2 AH2. It functions in the pathway porphyrin-containing compound metabolism; heme A biosynthesis; heme A from heme O: step 1/1. Its function is as follows. Catalyzes the conversion of heme O to heme A by two successive hydroxylations of the methyl group at C8. The first hydroxylation forms heme I, the second hydroxylation results in an unstable dihydroxymethyl group, which spontaneously dehydrates, resulting in the formyl group of heme A. This is Heme A synthase from Allorhizobium ampelinum (strain ATCC BAA-846 / DSM 112012 / S4) (Agrobacterium vitis (strain S4)).